The chain runs to 254 residues: Probable transcriptional regulator ycf27 (254 aa).

Positions 16–129 constitute a Response regulatory domain; it reads KVLIVDDEAS…ELEARIRAVL (114 aa). Aspartate 65 is modified (4-aspartylphosphate). The segment at residues 85 to 103 is a DNA-binding region (H-T-H motif); that stretch reads DVPIIMLTALGDVADRITG. The ompR/PhoB-type DNA-binding region spans 144–245; sequence SGIINFNFLT…ARGTGYLFQR (102 aa).

It localises to the plastid. The protein resides in the chloroplast. Its function is as follows. Probable promoter-specific protein mediating the interaction between DNA and RNA polymerase. This chain is Probable transcriptional regulator ycf27 (ycf27), found in Guillardia theta (Cryptophyte).